The following is a 379-amino-acid chain: 3-isopropylmalate dehydrogenase 1 (379 aa).

Substrate contacts are provided by R101, R111, R139, and D230. 3 residues coordinate Mg(2+): D230, D254, and D258. 293-305 (GSAPDIAGKGIAN) contributes to the NAD(+) binding site.

It belongs to the isocitrate and isopropylmalate dehydrogenases family. LeuB type 1 subfamily. In terms of assembly, homodimer. Requires Mg(2+) as cofactor. Mn(2+) serves as cofactor.

The protein resides in the cytoplasm. It carries out the reaction (2R,3S)-3-isopropylmalate + NAD(+) = 4-methyl-2-oxopentanoate + CO2 + NADH. It participates in amino-acid biosynthesis; L-leucine biosynthesis; L-leucine from 3-methyl-2-oxobutanoate: step 3/4. Its function is as follows. Catalyzes the oxidation of 3-carboxy-2-hydroxy-4-methylpentanoate (3-isopropylmalate) to 3-carboxy-4-methyl-2-oxopentanoate. The product decarboxylates to 4-methyl-2 oxopentanoate. This is 3-isopropylmalate dehydrogenase 1 from Bradyrhizobium diazoefficiens (strain JCM 10833 / BCRC 13528 / IAM 13628 / NBRC 14792 / USDA 110).